We begin with the raw amino-acid sequence, 163 residues long: Phosphopantetheine adenylyltransferase (163 aa).

Position 11 (serine 11) interacts with substrate. ATP-binding positions include 11–12 (SF) and histidine 19. Substrate contacts are provided by lysine 43, alanine 76, and arginine 90. Residues 91–93 (GLR), glutamate 101, and 126–132 (WQALSSS) contribute to the ATP site.

The protein belongs to the bacterial CoaD family. In terms of assembly, homohexamer. Mg(2+) is required as a cofactor.

The protein localises to the cytoplasm. The enzyme catalyses (R)-4'-phosphopantetheine + ATP + H(+) = 3'-dephospho-CoA + diphosphate. Its pathway is cofactor biosynthesis; coenzyme A biosynthesis; CoA from (R)-pantothenate: step 4/5. Reversibly transfers an adenylyl group from ATP to 4'-phosphopantetheine, yielding dephospho-CoA (dPCoA) and pyrophosphate. This is Phosphopantetheine adenylyltransferase from Streptococcus pyogenes serotype M6 (strain ATCC BAA-946 / MGAS10394).